A 223-amino-acid chain; its full sequence is Ubiquitin carboxyl-terminal hydrolase isozyme L1 (223 aa).

Position 1 is an N-acetylmethionine (Met1). The UCH catalytic domain maps to 2-221; the sequence is QLKPMEINPE…VRFSAVALCK (220 aa). Residues 5–10 are interaction with ubiquitin; sequence PMEINP. Catalysis depends on Cys90, which acts as the Nucleophile. Ser125 is subject to Phosphoserine. The Proton donor role is filled by His161. The interval 211-216 is interaction with ubiquitin; that stretch reads EVRFSA. Residue Cys220 is the site of S-farnesyl cysteine attachment. Positions 221-223 are cleaved as a propeptide — removed in mature form; it reads KAA.

Belongs to the peptidase C12 family. Monomer. Homodimer. Interacts with COPS5 and SNCA. Post-translationally, O-glycosylated.

It localises to the cytoplasm. The protein resides in the endoplasmic reticulum membrane. It carries out the reaction Thiol-dependent hydrolysis of ester, thioester, amide, peptide and isopeptide bonds formed by the C-terminal Gly of ubiquitin (a 76-residue protein attached to proteins as an intracellular targeting signal).. Its function is as follows. Ubiquitin-protein hydrolase involved both in the processing of ubiquitin precursors and of ubiquitinated proteins. This enzyme is a thiol protease that recognizes and hydrolyzes a peptide bond at the C-terminal glycine of ubiquitin. Also binds to free monoubiquitin and may prevent its degradation in lysosomes. The homodimer may have ATP-independent ubiquitin ligase activity. The sequence is that of Ubiquitin carboxyl-terminal hydrolase isozyme L1 (UCHL1) from Equus caballus (Horse).